The chain runs to 430 residues: Delta-aminolevulinic acid dehydratase 1, chloroplastic (430 aa).

The transit peptide at methionine 1 to arginine 52 directs the protein to the chloroplast. Residues glutamate 82–alanine 91 are compositionally biased toward pro residues. Positions glutamate 82–proline 101 are disordered. Catalysis depends on lysine 298, which acts as the Schiff-base intermediate with substrate. Residues arginine 308 and lysine 320 each contribute to the 5-aminolevulinate site. Glutamate 336 is a Mg(2+) binding site. The active-site Schiff-base intermediate with substrate is the lysine 351. 5-aminolevulinate-binding residues include serine 377 and tyrosine 416.

It belongs to the ALAD family. In terms of assembly, homooctamer. Mg(2+) is required as a cofactor. Highly expressed in cotyledons during dark-to-light transition.

It localises to the plastid. It is found in the chloroplast. It catalyses the reaction 2 5-aminolevulinate = porphobilinogen + 2 H2O + H(+). Its pathway is porphyrin-containing compound metabolism; protoporphyrin-IX biosynthesis; coproporphyrinogen-III from 5-aminolevulinate: step 1/4. The protein operates within porphyrin-containing compound metabolism; chlorophyll biosynthesis. Its function is as follows. Catalyzes an early step in the biosynthesis of tetrapyrroles. Binds two molecules of 5-aminolevulinate per subunit, each at a distinct site, and catalyzes their condensation to form porphobilinogen. This chain is Delta-aminolevulinic acid dehydratase 1, chloroplastic (HEMB1), found in Arabidopsis thaliana (Mouse-ear cress).